The primary structure comprises 228 residues: Aquaporin Z (228 aa).

2 consecutive transmembrane segments (helical) span residues 1-21 (MLNKLSAEFFGTFWLVFGGCG) and 23-43 (AILAAAFPELGIGFLGVALAF). Positions 63–65 (NPA) match the NPA 1 motif. 3 helical membrane-spanning segments follow: residues 82–102 (IPYWVAQVLGAIAAAAILYVI), 129–149 (MMAGLLIEIILTAFFIIIILG), and 154–174 (LAPAGFAPIAIGFGLTLIHLV). An NPA 2 motif is present at residues 184-186 (NPA). The helical transmembrane segment at 205 to 225 (LFWVAPLVGAVIGAIIWKGLL) threads the bilayer.

Belongs to the MIP/aquaporin (TC 1.A.8) family. Homotetramer.

The protein localises to the cell inner membrane. It catalyses the reaction H2O(in) = H2O(out). Its function is as follows. Channel that permits osmotically driven movement of water in both directions. It is involved in the osmoregulation and in the maintenance of cell turgor during volume expansion in rapidly growing cells. It mediates rapid entry or exit of water in response to abrupt changes in osmolarity. This is Aquaporin Z from Brucella abortus biovar 1 (strain 9-941).